Consider the following 732-residue polypeptide: Polyribonucleotide nucleotidyltransferase (732 aa).

Mg(2+)-binding residues include D489 and D495. The 60-residue stretch at 556-615 (PKIDTIQIDVDKIKIVIGKGGETIDKIIAETGVKIDIDEEGLVQIFSSDQAAIDRTKEII) folds into the KH domain. Residues 625-693 (GEVYHAKVVR…DKGRVDASMK (69 aa)) form the S1 motif domain. Positions 691 to 732 (SMKALIPRPPKPEKKEEKASEAKEASNDQASKSQSETASEEK) are disordered. The segment covering 700–716 (PKPEKKEEKASEAKEAS) has biased composition (basic and acidic residues). Over residues 717–732 (NDQASKSQSETASEEK) the composition is skewed to polar residues.

It belongs to the polyribonucleotide nucleotidyltransferase family. Requires Mg(2+) as cofactor.

The protein localises to the cytoplasm. The catalysed reaction is RNA(n+1) + phosphate = RNA(n) + a ribonucleoside 5'-diphosphate. Functionally, involved in mRNA degradation. Catalyzes the phosphorolysis of single-stranded polyribonucleotides processively in the 3'- to 5'-direction. This Streptococcus uberis (strain ATCC BAA-854 / 0140J) protein is Polyribonucleotide nucleotidyltransferase.